A 252-amino-acid chain; its full sequence is Mediator of RNA polymerase II transcription subunit 4 (252 aa).

Positions 70–112 (KIHQEMQVLEKEVEKRDSDIQQLQKQLKEAEHILATAVYQAKE) form a coiled coil. Residues 218 to 252 (HSNEFLMESLGPNKENEEDVEVMSTDSSSSSSDSD) form a disordered region. The segment covering 241 to 252 (STDSSSSSSDSD) has biased composition (low complexity).

The protein belongs to the Mediator complex subunit 4 family. Component of the Mediator complex.

Its subcellular location is the nucleus. In terms of biological role, component of the Mediator complex, a coactivator involved in the regulated transcription of nearly all RNA polymerase II-dependent genes. Mediator functions as a bridge to convey information from gene-specific regulatory proteins to the basal RNA polymerase II transcription machinery. Mediator is recruited to promoters by direct interactions with regulatory proteins and serves as a scaffold for the assembly of a functional preinitiation complex with RNA polymerase II and the general transcription factors. This Xenopus tropicalis (Western clawed frog) protein is Mediator of RNA polymerase II transcription subunit 4 (med4).